The sequence spans 717 residues: Fatty acid oxidation complex subunit alpha (717 aa).

An enoyl-CoA hydratase/isomerase region spans residues 1 to 190; the sequence is MIHAGNAITV…KDGAVDAVVA (190 aa). Asp298 serves as a coordination point for substrate. The 3-hydroxyacyl-CoA dehydrogenase stretch occupies residues 313-717; it reads HPVNQAAVLG…MAANNKKFYG (405 aa). NAD(+) contacts are provided by residues Met326, Asp345, 402 to 404, Lys409, and Ser431; that span reads VTE. The active-site For 3-hydroxyacyl-CoA dehydrogenase activity is His452. Residue Asn455 participates in NAD(+) binding. Asn502 contacts substrate.

The protein in the N-terminal section; belongs to the enoyl-CoA hydratase/isomerase family. This sequence in the C-terminal section; belongs to the 3-hydroxyacyl-CoA dehydrogenase family. Heterotetramer of two alpha chains (FadB) and two beta chains (FadA).

The enzyme catalyses a (3S)-3-hydroxyacyl-CoA + NAD(+) = a 3-oxoacyl-CoA + NADH + H(+). It catalyses the reaction a (3S)-3-hydroxyacyl-CoA = a (2E)-enoyl-CoA + H2O. It carries out the reaction a 4-saturated-(3S)-3-hydroxyacyl-CoA = a (3E)-enoyl-CoA + H2O. The catalysed reaction is (3S)-3-hydroxybutanoyl-CoA = (3R)-3-hydroxybutanoyl-CoA. The enzyme catalyses a (3Z)-enoyl-CoA = a 4-saturated (2E)-enoyl-CoA. It catalyses the reaction a (3E)-enoyl-CoA = a 4-saturated (2E)-enoyl-CoA. It participates in lipid metabolism; fatty acid beta-oxidation. In terms of biological role, involved in the aerobic and anaerobic degradation of long-chain fatty acids via beta-oxidation cycle. Catalyzes the formation of 3-oxoacyl-CoA from enoyl-CoA via L-3-hydroxyacyl-CoA. It can also use D-3-hydroxyacyl-CoA and cis-3-enoyl-CoA as substrate. The chain is Fatty acid oxidation complex subunit alpha from Acinetobacter baumannii (strain SDF).